The sequence spans 532 residues: Light-independent protochlorophyllide reductase subunit B (532 aa).

Residue D36 participates in [4Fe-4S] cluster binding. D318 (proton donor) is an active-site residue. 453–454 (GM) contributes to the substrate binding site.

Belongs to the ChlB/BchB/BchZ family. As to quaternary structure, protochlorophyllide reductase is composed of three subunits; ChlL, ChlN and ChlB. Forms a heterotetramer of two ChlB and two ChlN subunits. [4Fe-4S] cluster is required as a cofactor.

The protein localises to the plastid. It is found in the chloroplast. The catalysed reaction is chlorophyllide a + oxidized 2[4Fe-4S]-[ferredoxin] + 2 ADP + 2 phosphate = protochlorophyllide a + reduced 2[4Fe-4S]-[ferredoxin] + 2 ATP + 2 H2O. It participates in porphyrin-containing compound metabolism; chlorophyll biosynthesis (light-independent). Component of the dark-operative protochlorophyllide reductase (DPOR) that uses Mg-ATP and reduced ferredoxin to reduce ring D of protochlorophyllide (Pchlide) to form chlorophyllide a (Chlide). This reaction is light-independent. The NB-protein (ChlN-ChlB) is the catalytic component of the complex. The chain is Light-independent protochlorophyllide reductase subunit B from Tetradesmus obliquus (Green alga).